We begin with the raw amino-acid sequence, 505 residues long: N-succinylglutamate 5-semialdehyde dehydrogenase (505 aa).

Position 234 to 239 (234 to 239 (GSAHTG)) interacts with NAD(+). Residues E257 and C291 contribute to the active site.

Belongs to the aldehyde dehydrogenase family. AstD subfamily.

The catalysed reaction is N-succinyl-L-glutamate 5-semialdehyde + NAD(+) + H2O = N-succinyl-L-glutamate + NADH + 2 H(+). Its pathway is amino-acid degradation; L-arginine degradation via AST pathway; L-glutamate and succinate from L-arginine: step 4/5. Functionally, catalyzes the NAD-dependent reduction of succinylglutamate semialdehyde into succinylglutamate. The polypeptide is N-succinylglutamate 5-semialdehyde dehydrogenase (Yersinia pseudotuberculosis serotype IB (strain PB1/+)).